Consider the following 332-residue polypeptide: Biotin synthase (332 aa).

The region spanning 51–279 is the Radical SAM core domain; the sequence is YKVQLASLLS…LSRVRLSAGR (229 aa). 3 residues coordinate [4Fe-4S] cluster: cysteine 66, cysteine 70, and cysteine 73. Residues cysteine 110, cysteine 142, cysteine 202, and arginine 274 each coordinate [2Fe-2S] cluster.

This sequence belongs to the radical SAM superfamily. Biotin synthase family. Homodimer. [4Fe-4S] cluster serves as cofactor. It depends on [2Fe-2S] cluster as a cofactor.

The enzyme catalyses (4R,5S)-dethiobiotin + (sulfur carrier)-SH + 2 reduced [2Fe-2S]-[ferredoxin] + 2 S-adenosyl-L-methionine = (sulfur carrier)-H + biotin + 2 5'-deoxyadenosine + 2 L-methionine + 2 oxidized [2Fe-2S]-[ferredoxin]. The protein operates within cofactor biosynthesis; biotin biosynthesis; biotin from 7,8-diaminononanoate: step 2/2. Functionally, catalyzes the conversion of dethiobiotin (DTB) to biotin by the insertion of a sulfur atom into dethiobiotin via a radical-based mechanism. The chain is Biotin synthase from Prochlorococcus marinus (strain MIT 9211).